Reading from the N-terminus, the 270-residue chain is Urease accessory protein UreD (270 aa).

The protein belongs to the UreD family. In terms of assembly, ureD, UreF and UreG form a complex that acts as a GTP-hydrolysis-dependent molecular chaperone, activating the urease apoprotein by helping to assemble the nickel containing metallocenter of UreC. The complex may form in the order UreABCD, UreABCDF, UreABCDFG. The UreE protein probably delivers the nickel in a GTPase-dependent fashion.

The protein resides in the cytoplasm. Necessary for the functional incorporation of the urease nickel metallocenter. The protein is Urease accessory protein UreD of Klebsiella aerogenes (Enterobacter aerogenes).